We begin with the raw amino-acid sequence, 519 residues long: UvrABC system protein C (519 aa).

Residues 9-87 (HLPGCYLFKN…IKKHWPRYNI (79 aa)) form the GIY-YIG domain. Positions 191-226 (RELIESMEKDMRELASRQQFEQAMALRDEIAALEYL) constitute a UVR domain.

Belongs to the UvrC family. Interacts with UvrB in an incision complex.

The protein localises to the cytoplasm. The UvrABC repair system catalyzes the recognition and processing of DNA lesions. UvrC both incises the 5' and 3' sides of the lesion. The N-terminal half is responsible for the 3' incision and the C-terminal half is responsible for the 5' incision. This chain is UvrABC system protein C, found in Methanosarcina barkeri (strain Fusaro / DSM 804).